A 363-amino-acid chain; its full sequence is Phosphoserine aminotransferase (363 aa).

R42 serves as a coordination point for L-glutamate. Residues 76–77, W102, T156, D175, and Q198 contribute to the pyridoxal 5'-phosphate site; that span reads GR. At K199 the chain carries N6-(pyridoxal phosphate)lysine. A pyridoxal 5'-phosphate-binding site is contributed by 240–241; the sequence is NT.

Belongs to the class-V pyridoxal-phosphate-dependent aminotransferase family. SerC subfamily. In terms of assembly, homodimer. Pyridoxal 5'-phosphate is required as a cofactor.

It localises to the cytoplasm. The catalysed reaction is O-phospho-L-serine + 2-oxoglutarate = 3-phosphooxypyruvate + L-glutamate. It carries out the reaction 4-(phosphooxy)-L-threonine + 2-oxoglutarate = (R)-3-hydroxy-2-oxo-4-phosphooxybutanoate + L-glutamate. It participates in amino-acid biosynthesis; L-serine biosynthesis; L-serine from 3-phospho-D-glycerate: step 2/3. It functions in the pathway cofactor biosynthesis; pyridoxine 5'-phosphate biosynthesis; pyridoxine 5'-phosphate from D-erythrose 4-phosphate: step 3/5. In terms of biological role, catalyzes the reversible conversion of 3-phosphohydroxypyruvate to phosphoserine and of 3-hydroxy-2-oxo-4-phosphonooxybutanoate to phosphohydroxythreonine. This chain is Phosphoserine aminotransferase, found in Shewanella halifaxensis (strain HAW-EB4).